Here is a 344-residue protein sequence, read N- to C-terminus: Putative transport protein sll0060 (344 aa).

The next 8 helical transmembrane spans lie at 14-34 (LWIG…LQIL), 41-61 (LRIF…VRWL), 72-92 (AVAL…LLVI), 155-175 (LINL…IFIM), 215-235 (IGQA…LSIF), 237-257 (VPLA…PFGG), 262-282 (VLIS…VLAI), and 310-330 (ILLS…LVAI).

The protein belongs to the autoinducer-2 exporter (AI-2E) (TC 2.A.86) family.

The protein resides in the cell membrane. The sequence is that of Putative transport protein sll0060 from Synechocystis sp. (strain ATCC 27184 / PCC 6803 / Kazusa).